The following is a 957-amino-acid chain: Valine--tRNA ligase (957 aa).

Positions 47–57 (PNITGQLHLGH) match the 'HIGH' region motif. The 'KMSKS' region motif lies at 558 to 562 (KMSKS). An ATP-binding site is contributed by Lys561. The stretch at 889 to 918 (FNKENEINRLKKESELINRKIETIQKLLDD) forms a coiled coil.

The protein belongs to the class-I aminoacyl-tRNA synthetase family. ValS type 1 subfamily. In terms of assembly, monomer.

Its subcellular location is the cytoplasm. The catalysed reaction is tRNA(Val) + L-valine + ATP = L-valyl-tRNA(Val) + AMP + diphosphate. Functionally, catalyzes the attachment of valine to tRNA(Val). As ValRS can inadvertently accommodate and process structurally similar amino acids such as threonine, to avoid such errors, it has a 'posttransfer' editing activity that hydrolyzes mischarged Thr-tRNA(Val) in a tRNA-dependent manner. The sequence is that of Valine--tRNA ligase from Blochmanniella pennsylvanica (strain BPEN).